A 166-amino-acid chain; its full sequence is MLSKELLAALNEQMNQEYFAAHAYMAMAAYCDKESYDGFANFYIEQAKEERFHGKKIYDYINDRGEHAILDTIKAPKVEFSSILETFKDSLAQERDVTQRFYNLSELARNDKDYATISFLNWFLDEQVEEESTFETHIDYLTRIGDDCNTLYLYEKELAARSFNEQ.

The 144-residue stretch at 2–145 folds into the Ferritin-like diiron domain; the sequence is LSKELLAALN…THIDYLTRIG (144 aa). 5 residues coordinate Fe cation: glutamate 17, glutamate 50, histidine 53, glutamate 94, and glutamine 127.

The protein belongs to the ferritin family. Prokaryotic subfamily.

It is found in the cytoplasm. It carries out the reaction 4 Fe(2+) + O2 + 6 H2O = 4 iron(III) oxide-hydroxide + 12 H(+). Iron-storage protein. This is Bacterial non-heme ferritin (ftnA) from Staphylococcus epidermidis (strain ATCC 35984 / DSM 28319 / BCRC 17069 / CCUG 31568 / BM 3577 / RP62A).